We begin with the raw amino-acid sequence, 66 residues long: Large ribosomal subunit protein bL33c (66 aa).

The protein belongs to the bacterial ribosomal protein bL33 family.

The protein resides in the plastid. It is found in the chloroplast. This chain is Large ribosomal subunit protein bL33c, found in Citrus sinensis (Sweet orange).